The sequence spans 272 residues: MSRIESTFSSLKTQGRKALIPYVTAGFPFADVTPELMHGMVAGGADVIELGMPFSDPSADGPVIQKAGEKALSFGIGLVQVLEMVRIFRTKDHTTPVVLMGYANPVERYDIKHGAGASESAFIRDAAAAGVDGMLIVDYPPEECVEFSARLKAHGMDLIFLLAPTSTDARMAQVAQVASGYVYYVSLKGVTGAGTLDVDAVEAMLPRIRRHVNVPVGVGFGIRDAATAKAIGKVADAVVIGSKIIQLIENQPRDRVAAVAHDFLKEIRSALD.

Active-site proton acceptor residues include Glu49 and Asp60.

Belongs to the TrpA family. As to quaternary structure, tetramer of two alpha and two beta chains.

The catalysed reaction is (1S,2R)-1-C-(indol-3-yl)glycerol 3-phosphate + L-serine = D-glyceraldehyde 3-phosphate + L-tryptophan + H2O. It participates in amino-acid biosynthesis; L-tryptophan biosynthesis; L-tryptophan from chorismate: step 5/5. The alpha subunit is responsible for the aldol cleavage of indoleglycerol phosphate to indole and glyceraldehyde 3-phosphate. The polypeptide is Tryptophan synthase alpha chain (Polaromonas naphthalenivorans (strain CJ2)).